Here is a 518-residue protein sequence, read N- to C-terminus: MACCGGGRGEGAAATESEAYLEGEAVREARELVAELCRHFYGQGWVTGTVGSITVKANDPALPLADQLIVMSPSGVQKERMVAEDMYVLSADGKVLSSPVSKPWPNKPPKCTDCAPLFMKAYLMRGAGAVIHSHGMETCIATMLDHGAKEFRMTHMEMIKGIKGHGYRDELVVPIIENTPYEYELTDSLAEAIAAYPKATAVLVRNHGIYVWGDSWINAKTQAECYHYLFDAAIKLYQLGIDWTTPEHGPINSAKRPRSVLSSSIPNGCPDSKSSKHCVVLDIEGTTTPISFVTDVMFPYARDNVRKHLTSTYSSDETKEDIKLLRIQVEEDLKNGIVGSVPIPPDDADKEEVINALVANVESMIKADRKITSLKQLQGHIWRTGFESKELQGVVFDDVPEALKHWHASGMKVYIYSSGSREAQRLLFGNTAYGDLRQYLCGFFDTTTGNKRETRSYFEISQSLGVDSPAQILFITDVFQEAVAAKSAGFEVIISIRPGNAPLPENHGFRTIKSFSEI.

The interval M1–D242 is methylthioribulose-1-phosphate dehydratase. Substrate is bound at residue C114. Zn(2+) is bound by residues H132 and H134. E157 serves as the catalytic Proton donor/acceptor; for methylthioribulose-1-phosphate dehydratase activity. Residue H207 participates in Zn(2+) binding. Residues V279–I518 are enolase-phosphatase E1. Residues D282 and E284 each coordinate Mg(2+). Residues S417–S418 and K451 each bind substrate. D477 lines the Mg(2+) pocket.

In the N-terminal section; belongs to the aldolase class II family. MtnB subfamily. The protein in the C-terminal section; belongs to the HAD-like hydrolase superfamily. MasA/MtnC family. Zn(2+) is required as a cofactor. It depends on Mg(2+) as a cofactor.

The enzyme catalyses 5-(methylsulfanyl)-D-ribulose 1-phosphate = 5-methylsulfanyl-2,3-dioxopentyl phosphate + H2O. The catalysed reaction is 5-methylsulfanyl-2,3-dioxopentyl phosphate + H2O = 1,2-dihydroxy-5-(methylsulfanyl)pent-1-en-3-one + phosphate. It functions in the pathway amino-acid biosynthesis; L-methionine biosynthesis via salvage pathway; L-methionine from S-methyl-5-thio-alpha-D-ribose 1-phosphate: step 2/6. It participates in amino-acid biosynthesis; L-methionine biosynthesis via salvage pathway; L-methionine from S-methyl-5-thio-alpha-D-ribose 1-phosphate: step 3/6. The protein operates within amino-acid biosynthesis; L-methionine biosynthesis via salvage pathway; L-methionine from S-methyl-5-thio-alpha-D-ribose 1-phosphate: step 4/6. The sequence is that of Probable bifunctional methylthioribulose-1-phosphate dehydratase/enolase-phosphatase E1 from Oryza sativa subsp. indica (Rice).